We begin with the raw amino-acid sequence, 231 residues long: Claudin-10 (231 aa).

Residues 1 to 21 (MASTASEIIAFMVSISGWVLV) traverse the membrane as a helical segment. Topologically, residues 22–80 (SSTLPTDYWKVSTIDGTVITTATYWANLWKTCVTDSTGVSNCKDFPSMLALDGYIQACR) are extracellular. The chain crosses the membrane as a helical span at residues 81 to 101 (GLMIAAVSLGFFGSIFALIGM). The Cytoplasmic portion of the chain corresponds to 102-115 (KCTKVGGSDKAKAK). Residues 116–136 (IACLAGIVFILSGLCSMTGCS) form a helical membrane-spanning segment. Over 137–160 (LYANKITTEFFDPLFVEQKYELGA) the chain is Extracellular. Residues 161 to 181 (ALFIGWAGASLCLIGGVIFCF) traverse the membrane as a helical segment. Residues 182 to 231 (SISDNNKAPRMGYTYNGATSVMSSRTKYHGREGDLKTPNPSKQFDKNAYV) lie on the Cytoplasmic side of the membrane.

This sequence belongs to the claudin family. As to quaternary structure, can form homodimers both in trans (interaction between CLDN10 molecules in opposing membranes) and in cis (interaction between CLDN10 molecules within one membrane). Interacts with CLDN19.

The protein localises to the cell junction. It is found in the tight junction. It localises to the cell membrane. The catalysed reaction is Na(+)(in) = Na(+)(out). The enzyme catalyses Li(+)(in) = Li(+)(out). It carries out the reaction K(+)(in) = K(+)(out). It catalyses the reaction Rb(+)(in) = Rb(+)(out). The catalysed reaction is Cs(+)(in) = Cs(+)(out). The enzyme catalyses NH4(+)(in) = NH4(+)(out). It carries out the reaction methylamine(out) = methylamine(in). It catalyses the reaction Mg(2+)(in) = Mg(2+)(out). The catalysed reaction is Ca(2+)(in) = Ca(2+)(out). The enzyme catalyses Sr(2+)(in) = Sr(2+)(out). It carries out the reaction chloride(in) = chloride(out). It catalyses the reaction nitrate(in) = nitrate(out). In terms of biological role, forms paracellular channels: polymerizes in tight junction strands with cation- and anion-selective channels through the strands, conveying epithelial permeability in a process known as paracellular tight junction permeability. In sweat glands and in the thick ascending limb (TAL) of Henle's loop in kidney, it controls paracellular sodium permeability which is essential for proper sweat production and renal function. In renal proximal tubules, it conveys selective chloride over hydrogencarbonate anion permeability which is required for renal chloride reabsorption and salt homeostasis. The chain is Claudin-10 (CLDN10) from Bos taurus (Bovine).